Consider the following 358-residue polypeptide: Dihydroorotate dehydrogenase (quinone) (358 aa).

Residues 61 to 65 (AGFDK) and Gly85 each bind FMN. Lys65 is a binding site for substrate. 110–114 (NRFGL) provides a ligand contact to substrate. Residues Asn139 and Asn170 each contribute to the FMN site. A substrate-binding site is contributed by Asn170. Ser173 (nucleophile) is an active-site residue. Asn175 is a substrate binding site. Positions 211 and 239 each coordinate FMN. A substrate-binding site is contributed by 240-241 (NT). FMN is bound by residues Gly263, Gly292, and 313 to 314 (YS).

It belongs to the dihydroorotate dehydrogenase family. Type 2 subfamily. In terms of assembly, monomer. Requires FMN as cofactor.

The protein localises to the cell membrane. The enzyme catalyses (S)-dihydroorotate + a quinone = orotate + a quinol. It functions in the pathway pyrimidine metabolism; UMP biosynthesis via de novo pathway; orotate from (S)-dihydroorotate (quinone route): step 1/1. Functionally, catalyzes the conversion of dihydroorotate to orotate with quinone as electron acceptor. In Methylorubrum extorquens (strain CM4 / NCIMB 13688) (Methylobacterium extorquens), this protein is Dihydroorotate dehydrogenase (quinone).